An 880-amino-acid chain; its full sequence is DNA mismatch repair protein MutS (880 aa).

605-612 (GPNMSGKS) is a binding site for ATP. Residues 790 to 829 (QETAAVPSRGVEPPAPVIEPTPAKEQTPVKEQTTPLVEES) form a disordered region. Positions 818–829 (VKEQTTPLVEES) are enriched in polar residues.

This sequence belongs to the DNA mismatch repair MutS family.

Functionally, this protein is involved in the repair of mismatches in DNA. It is possible that it carries out the mismatch recognition step. This protein has a weak ATPase activity. This is DNA mismatch repair protein MutS from Limosilactobacillus fermentum (strain NBRC 3956 / LMG 18251) (Lactobacillus fermentum).